Reading from the N-terminus, the 117-residue chain is UPF0342 protein OB1136 (117 aa).

The protein belongs to the UPF0342 family.

This chain is UPF0342 protein OB1136, found in Oceanobacillus iheyensis (strain DSM 14371 / CIP 107618 / JCM 11309 / KCTC 3954 / HTE831).